Reading from the N-terminus, the 294-residue chain is Probable cobalamin biosynthesis protein CobD (294 aa).

The next 4 membrane-spanning stretches (helical) occupy residues 52-72 (AGLLTALVVITFAFLLSIVPF), 73-93 (YAPFPLNYFLAAYLLKSSFAI), 145-165 (DSVVAPLFYFLLFGLQGAVIY), and 268-288 (IYWLVVTGWVIVVVLLLATGV).

Belongs to the CobD/CbiB family.

The protein localises to the cell membrane. Its pathway is cofactor biosynthesis; adenosylcobalamin biosynthesis. In terms of biological role, converts cobyric acid to cobinamide by the addition of aminopropanol on the F carboxylic group. This chain is Probable cobalamin biosynthesis protein CobD, found in Thermococcus kodakarensis (strain ATCC BAA-918 / JCM 12380 / KOD1) (Pyrococcus kodakaraensis (strain KOD1)).